We begin with the raw amino-acid sequence, 99 residues long: Nucleoid-associated protein SUB1611 (99 aa).

It belongs to the YbaB/EbfC family. As to quaternary structure, homodimer.

It is found in the cytoplasm. Its subcellular location is the nucleoid. Functionally, binds to DNA and alters its conformation. May be involved in regulation of gene expression, nucleoid organization and DNA protection. The sequence is that of Nucleoid-associated protein SUB1611 from Streptococcus uberis (strain ATCC BAA-854 / 0140J).